Here is an 837-residue protein sequence, read N- to C-terminus: Cap-specific mRNA (nucleoside-2'-O-)-methyltransferase 1 (837 aa).

Positions 1 to 66 are disordered; it reads MKRRTDPECT…EGKQPCSDDF (66 aa). Residues 2-18 carry the Bipartite nuclear localization signal motif; sequence KRRTDPECTAPLKKQKR. Residues S27, S30, and S52 each carry the phosphoserine modification. The segment covering 56–66 has biased composition (basic and acidic residues); the sequence is TEGKQPCSDDF. One can recognise a G-patch domain in the interval 86–132; that stretch reads YNSVSQRLMAKMGFREGEGLGKYSQGRKDIVETSNQKGRRGLGLTLQ. S90 is modified (phosphoserine). K107 is modified (N6-acetyllysine). Residues 202-206 and R217 each bind substrate; that span reads KSVFD. Positions 230 to 449 constitute a RrmJ-type SAM-dependent 2'-O-MTase domain; that stretch reads FFLNRAAMKM…ERYVVCKGLK (220 aa). N233 contributes to the S-adenosyl-L-methionine binding site. K238 is an active-site residue. S-adenosyl-L-methionine contacts are provided by residues 276-282 and 334-335; these read CAGPGGF and DI. The active site involves D363. Residue 373–375 coordinates substrate; it reads NLQ. Catalysis depends on K403, which acts as the Proton acceptor. Substrate is bound at residue N438. Residues 726-834 are interaction with POLR2A; the sequence is SGGTPKLSYT…VLSFIQSHNP (109 aa). The 35-residue stretch at 751–785 folds into the WW domain; sequence RTVNEPWTMGFSKSNNRKFFYNKKTQKSVYALPTE.

In terms of assembly, interacts with POLR2A (via C-terminus).

It is found in the nucleus. It carries out the reaction a 5'-end (N(7)-methyl 5'-triphosphoguanosine)-ribonucleoside in mRNA + S-adenosyl-L-methionine = a 5'-end (N(7)-methyl 5'-triphosphoguanosine)-(2'-O-methyl-ribonucleoside) in mRNA + S-adenosyl-L-homocysteine + H(+). In terms of biological role, S-adenosyl-L-methionine-dependent methyltransferase that mediates mRNA cap1 2'-O-ribose methylation to the 5'-cap structure of mRNAs. Methylates the ribose of the first nucleotide of a m(7)GpppG-capped mRNA and small nuclear RNA (snRNA) to produce m(7)GpppRm (cap1). Displays a preference for cap0 transcripts. Cap1 modification is linked to higher levels of translation. May be involved in the interferon response pathway. The polypeptide is Cap-specific mRNA (nucleoside-2'-O-)-methyltransferase 1 (Cmtr1) (Mus musculus (Mouse)).